The chain runs to 257 residues: Homeobox protein goosecoid (257 aa).

Positions 160 to 219 form a DNA-binding region, homeobox; it reads KRRHRTIFTDEQLEALENLFQETKYPDVGTREQLARKVHLREEKVEVWFKNRRAKWRRQK. Residues 213 to 257 form a disordered region; that stretch reads AKWRRQKRSSSEESENAEKWNKTSSSKASPEKREEEGKSDLDSDS. Basic and acidic residues predominate over residues 241–257; the sequence is SPEKREEEGKSDLDSDS.

Belongs to the paired homeobox family. Bicoid subfamily.

The protein localises to the nucleus. Its function is as follows. Regulates chordin (CHRD). May play a role in spatial programing within discrete embryonic fields or lineage compartments during organogenesis. In concert with NKX3-2, plays a role in defining the structural components of the middle ear; required for the development of the entire tympanic ring. Probably involved in the regulatory networks that define neural crest cell fate specification and determine mesoderm cell lineages in mammals. The protein is Homeobox protein goosecoid (GSC) of Homo sapiens (Human).